Consider the following 82-residue polypeptide: Small ribosomal subunit protein uS17 (82 aa).

The protein belongs to the universal ribosomal protein uS17 family. As to quaternary structure, part of the 30S ribosomal subunit.

Its function is as follows. One of the primary rRNA binding proteins, it binds specifically to the 5'-end of 16S ribosomal RNA. The sequence is that of Small ribosomal subunit protein uS17 from Synechococcus elongatus (strain ATCC 33912 / PCC 7942 / FACHB-805) (Anacystis nidulans R2).